A 245-amino-acid polypeptide reads, in one-letter code: 1-(5-phosphoribosyl)-5-[(5-phosphoribosylamino)methylideneamino] imidazole-4-carboxamide isomerase (245 aa).

D8 serves as the catalytic Proton acceptor. Residue D130 is the Proton donor of the active site.

Belongs to the HisA/HisF family.

The protein resides in the cytoplasm. The enzyme catalyses 1-(5-phospho-beta-D-ribosyl)-5-[(5-phospho-beta-D-ribosylamino)methylideneamino]imidazole-4-carboxamide = 5-[(5-phospho-1-deoxy-D-ribulos-1-ylimino)methylamino]-1-(5-phospho-beta-D-ribosyl)imidazole-4-carboxamide. Its pathway is amino-acid biosynthesis; L-histidine biosynthesis; L-histidine from 5-phospho-alpha-D-ribose 1-diphosphate: step 4/9. In Pseudomonas putida (strain ATCC 700007 / DSM 6899 / JCM 31910 / BCRC 17059 / LMG 24140 / F1), this protein is 1-(5-phosphoribosyl)-5-[(5-phosphoribosylamino)methylideneamino] imidazole-4-carboxamide isomerase.